Reading from the N-terminus, the 418-residue chain is 3-deoxy-D-manno-octulosonic acid transferase (418 aa).

A helical; Signal-anchor transmembrane segment spans residues 7-27 (FLSFLLLPIYFVIIFIRLLIG). The Proton acceptor role is filled by Glu-60. Residues 264 to 265 (PR), 305 to 307 (FGE), and 330 to 333 (NILE) contribute to the CMP site.

Belongs to the glycosyltransferase group 1 family. Glycosyltransferase 30 subfamily.

Its subcellular location is the cell inner membrane. The catalysed reaction is lipid IVA (E. coli) + CMP-3-deoxy-beta-D-manno-octulosonate = alpha-Kdo-(2-&gt;6)-lipid IVA (E. coli) + CMP + H(+). It participates in bacterial outer membrane biogenesis; LPS core biosynthesis. Functionally, involved in lipopolysaccharide (LPS) biosynthesis. Catalyzes the transfer of 3-deoxy-D-manno-octulosonate (Kdo) residue(s) from CMP-Kdo to lipid IV(A), the tetraacyldisaccharide-1,4'-bisphosphate precursor of lipid A. This Rickettsia bellii (strain RML369-C) protein is 3-deoxy-D-manno-octulosonic acid transferase (waaA).